The primary structure comprises 571 residues: Endonuclease/exonuclease/phosphatase family domain-containing protein 1 (571 aa).

A disordered region spans residues 1-20; the sequence is MGSTLGCHRSIPRDPSDLSH. Glycine 2 carries the N-myristoyl glycine lipid modification. Over residues 11-20 the composition is skewed to basic and acidic residues; that stretch reads IPRDPSDLSH. Phosphoserine occurs at positions 16, 21, and 25. The HhH domain maps to 38–67; it reads ERLNINTATEEELMTLPGVTRAVARSIVEY. 4 positions are modified to phosphoserine: serine 106, serine 110, serine 162, and serine 175. The interval 202–227 is disordered; the sequence is SRPPSTHTNGGLTFTAKPHPSPTSLS. Polar residues predominate over residues 204–213; sequence PPSTHTNGGL. A Phosphothreonine modification is found at threonine 267. Serine 430 is subject to Phosphoserine. Residues 548 to 571 are disordered; it reads RKEGPRSGNGLTLERSEANIKHER. The span at 561-571 shows a compositional bias: basic and acidic residues; sequence ERSEANIKHER.

The chain is Endonuclease/exonuclease/phosphatase family domain-containing protein 1 (EEPD1) from Bos taurus (Bovine).